The sequence spans 187 residues: Dihydrofolate reductase (187 aa).

In terms of domain architecture, DHFR spans 4–185 (PLNCIVAVSQ…IKYKFEVYEK (182 aa)). NADP(+)-binding positions include Ala-10 and 16-22 (GIGKNGD). 31-36 (EFKYFQ) is a substrate binding site. Lys-33 bears the N6-acetyllysine; alternate mark. N6-succinyllysine; alternate is present on Lys-33. 55-57 (RKT) is a binding site for NADP(+). Asn-65 and Arg-71 together coordinate substrate. NADP(+)-binding positions include 77-79 (SRE) and 117-124 (GGSSVYQE).

This sequence belongs to the dihydrofolate reductase family. As to quaternary structure, homodimer.

It is found in the mitochondrion. Its subcellular location is the cytoplasm. The catalysed reaction is (6S)-5,6,7,8-tetrahydrofolate + NADP(+) = 7,8-dihydrofolate + NADPH + H(+). It functions in the pathway cofactor biosynthesis; tetrahydrofolate biosynthesis; 5,6,7,8-tetrahydrofolate from 7,8-dihydrofolate: step 1/1. Functionally, key enzyme in folate metabolism. Contributes to the de novo mitochondrial thymidylate biosynthesis pathway. Catalyzes an essential reaction for de novo glycine and purine synthesis, and for DNA precursor synthesis. Binds its own mRNA. The sequence is that of Dihydrofolate reductase (Dhfr) from Mus musculus (Mouse).